The following is a 412-amino-acid chain: Serine hydroxymethyltransferase (412 aa).

(6S)-5,6,7,8-tetrahydrofolate contacts are provided by residues L117 and 121-123 (GHL). An N6-(pyridoxal phosphate)lysine modification is found at K226. 349 to 351 (SPF) is a (6S)-5,6,7,8-tetrahydrofolate binding site.

This sequence belongs to the SHMT family. Homodimer. Requires pyridoxal 5'-phosphate as cofactor.

The protein localises to the cytoplasm. It catalyses the reaction (6R)-5,10-methylene-5,6,7,8-tetrahydrofolate + glycine + H2O = (6S)-5,6,7,8-tetrahydrofolate + L-serine. Its pathway is one-carbon metabolism; tetrahydrofolate interconversion. It participates in amino-acid biosynthesis; glycine biosynthesis; glycine from L-serine: step 1/1. In terms of biological role, catalyzes the reversible interconversion of serine and glycine with tetrahydrofolate (THF) serving as the one-carbon carrier. This reaction serves as the major source of one-carbon groups required for the biosynthesis of purines, thymidylate, methionine, and other important biomolecules. Also exhibits THF-independent aldolase activity toward beta-hydroxyamino acids, producing glycine and aldehydes, via a retro-aldol mechanism. In Geobacillus thermodenitrificans (strain NG80-2), this protein is Serine hydroxymethyltransferase.